The sequence spans 105 residues: Large ribosomal subunit protein uL24 (105 aa).

It belongs to the universal ribosomal protein uL24 family. In terms of assembly, part of the 50S ribosomal subunit.

Its function is as follows. One of two assembly initiator proteins, it binds directly to the 5'-end of the 23S rRNA, where it nucleates assembly of the 50S subunit. Functionally, one of the proteins that surrounds the polypeptide exit tunnel on the outside of the subunit. The polypeptide is Large ribosomal subunit protein uL24 (Aliivibrio salmonicida (strain LFI1238) (Vibrio salmonicida (strain LFI1238))).